A 347-amino-acid chain; its full sequence is Transcription factor JunD (347 aa).

Residues 1 to 43 (METPFYGDEALSGLGGGASGSGGSFASPGRLFPGAPPTAAAGS) form a disordered region. Residues 13-23 (GLGGGASGSGG) show a composition bias toward gly residues. A Menin-binding motif (MBM) motif is present at residues 27–39 (SPGRLFPGAPPTA). The short motif at 46-55 (KKDALTLSLS) is the MAP kinase docking motif; essential for its phosphorylation element. Residues 62–86 (LKPAAAPPPTPLRADGAPSAAPPDG) are disordered. Residues 73-86 (LRADGAPSAAPPDG) are compositionally biased toward low complexity. Ser90 is modified (phosphoserine). Residue Ser100 is modified to Phosphoserine; by MAPK8. Phosphothreonine is present on Thr117. Positions 244–264 (QTVPDVPSFGESPPLSPIDMD) are disordered. Ser251, Ser255, and Ser259 each carry phosphoserine. The basic motif stretch occupies residues 268–295 (RIKAERKRLRNRIAASKCRKRKLERISR). A bZIP domain is found at 268–331 (RIKAERKRLR…AQLKQKVLSH (64 aa)). Residues 296–324 (LEEKVKTLKSQNTELASTASLLREQVAQL) form a leucine-zipper region.

It belongs to the bZIP family. Jun subfamily. In terms of assembly, heterodimer; binds DNA as a heterodimer. Component of an AP-1 transcription factor complex composed of JUN-FOS heterodimers. As part of the AP-1 transcription factor complex, forms heterodimers with FOS proteins, thereby binding to the AP-1 consensus sequence and stimulating transcription. Forms heterodimers with FOSB; thereby binding to the AP-1 consensus sequence. Interacts (via MBM motif) with MEN1; this interaction represses transcriptional activation. Interacts with MAPK10; this interaction is inhibited in the presence of MEN1. Post-translationally, phosphorylated by MAP kinases MAPK8 and MAPK10; phosphorylation is inhibited in the presence of MEN1.

The protein localises to the nucleus. Transcription factor binding AP-1 sites. Heterodimerizes with proteins of the FOS family to form an AP-1 transcription factor complex, thereby enhancing their DNA binding activity to an AP-1 consensus sequence 3'-TGA[GC]TCA-5' and enhancing their transcriptional activity. In Homo sapiens (Human), this protein is Transcription factor JunD (JUND).